Reading from the N-terminus, the 167-residue chain is UPF0225 protein VV1358 (167 aa).

Belongs to the UPF0225 family.

The chain is UPF0225 protein VV1358 from Vibrio vulnificus (strain YJ016).